We begin with the raw amino-acid sequence, 150 residues long: Ribosomal RNA large subunit methyltransferase H (150 aa).

Residues Ala-100 and 118 to 123 each bind S-adenosyl-L-methionine; that span reads LSEMTF.

The protein belongs to the RNA methyltransferase RlmH family. Homodimer.

It localises to the cytoplasm. It carries out the reaction pseudouridine(1915) in 23S rRNA + S-adenosyl-L-methionine = N(3)-methylpseudouridine(1915) in 23S rRNA + S-adenosyl-L-homocysteine + H(+). Functionally, specifically methylates the pseudouridine at position 1915 (m3Psi1915) in 23S rRNA. The protein is Ribosomal RNA large subunit methyltransferase H of Helicobacter pylori (strain P12).